Reading from the N-terminus, the 260-residue chain is MRRTGRSYKPLLSQLKDHHIPVHPSSRAERAMESRTLLVLLFVGVVTIVSSGLERAAAQDDTDDGILPSSDVQPLVSNMIGQGFTVAAAVAQSLQTLIPIRSTLLIPSNNAIAGVDANLSQEDIINTLQYHVLTFPTSFEALSRNDVGAELPTMLQGEMITVTSNSPGNFTLNEVNITHPDVCSSTRFIACHGIDRVLAYNSSLVTAAGPEASPPFGAEQASPAPEALPPGTRSPNNTANPSNRKSNSTRSSASRYPVSE.

Residues 1–35 lie on the Cytoplasmic side of the membrane; that stretch reads MRRTGRSYKPLLSQLKDHHIPVHPSSRAERAMESR. A helical membrane pass occupies residues 36 to 58; sequence TLLVLLFVGVVTIVSSGLERAAA. The FAS1 domain occupies 59–198; it reads QDDTDDGILP…IACHGIDRVL (140 aa). The Extracellular segment spans residues 59-260; that stretch reads QDDTDDGILP…SSASRYPVSE (202 aa). 6 N-linked (GlcNAc...) asparagine glycosylation sites follow: Asn-118, Asn-169, Asn-176, Asn-201, Asn-236, and Asn-247. The segment at 210-260 is disordered; that stretch reads PEASPPFGAEQASPAPEALPPGTRSPNNTANPSNRKSNSTRSSASRYPVSE. Residues 233 to 254 are compositionally biased toward polar residues; the sequence is RSPNNTANPSNRKSNSTRSSAS.

It is found in the membrane. The polypeptide is FAS1 domain-containing protein SELMODRAFT_448915 (Selaginella moellendorffii (Spikemoss)).